The sequence spans 710 residues: Dihydroxyacetone synthase (710 aa).

Residues His-78 and 128 to 130 each bind thiamine diphosphate; that span reads GPL. Residues Asp-169, Asn-199, and Val-201 each coordinate Mg(2+). A thiamine diphosphate-binding site is contributed by Asn-199. Residues His-275, Glu-433, and Phe-461 each contribute to the thiamine diphosphate site. Glu-433 serves as the catalytic Proton donor. The Microbody targeting signal motif lies at 708–710; sequence NKL.

The protein belongs to the transketolase family. Mg(2+) serves as cofactor. The cofactor is Ca(2+). Mn(2+) is required as a cofactor. Requires Co(2+) as cofactor. It depends on thiamine diphosphate as a cofactor.

Its subcellular location is the peroxisome. It carries out the reaction D-xylulose 5-phosphate + formaldehyde = dihydroxyacetone + D-glyceraldehyde 3-phosphate. Its function is as follows. This is the major methanol assimilatory enzyme from the methylotrophic Hansenula polymorpha. This chain is Dihydroxyacetone synthase (DAS), found in Pichia angusta (Yeast).